Here is a 477-residue protein sequence, read N- to C-terminus: Leukotoxin export protein LtxD (477 aa).

The chain crosses the membrane as a helical span at residues 64 to 84 (IMLFLTLAIIVSIFSNVEIIA). The stretch at 206–287 (LNLNKKEAEK…ENEVLLAKEE (82 aa)) forms a coiled coil.

It belongs to the membrane fusion protein (MFP) (TC 8.A.1) family. In terms of assembly, probably part of a complex composed of LtxB, LtxD and TdeA, which forms a single transport channel across the two membranes.

The protein localises to the cell inner membrane. Functionally, involved in the export of the LtxA leukotoxin. The polypeptide is Leukotoxin export protein LtxD (Aggregatibacter actinomycetemcomitans (Actinobacillus actinomycetemcomitans)).